We begin with the raw amino-acid sequence, 324 residues long: NADH-ubiquinone oxidoreductase chain 1 (324 aa).

9 helical membrane-spanning segments follow: residues 9–29 (IINPLAYIVPVLLAVAFLTLL), 43–63 (PNIVGPYGLLQPIADGLKLFI), 75–95 (FLFLATPMLALTLALTLWAPM), 106–126 (LGVLFVLALSSLAVYSILGSG), 146–166 (ISYEVSLGLILLSVIIFTGGF), 177–197 (SIWLLVPAWPLAAMWYISTLA), 237–257 (ILLMNTLSAILFLGASHIPAF), 259–279 (ELTAVNLMTKAALLSVVFLWV), and 299–319 (FLPLTLALVLWHLALPTAMAG).

The protein belongs to the complex I subunit 1 family.

The protein localises to the mitochondrion inner membrane. The catalysed reaction is a ubiquinone + NADH + 5 H(+)(in) = a ubiquinol + NAD(+) + 4 H(+)(out). In terms of biological role, core subunit of the mitochondrial membrane respiratory chain NADH dehydrogenase (Complex I) that is believed to belong to the minimal assembly required for catalysis. Complex I functions in the transfer of electrons from NADH to the respiratory chain. The immediate electron acceptor for the enzyme is believed to be ubiquinone. This is NADH-ubiquinone oxidoreductase chain 1 (MT-ND1) from Salmo salar (Atlantic salmon).